A 20-amino-acid polypeptide reads, in one-letter code: Ribosome-inactivating protein (20 aa).

The interval 1 to 20 (NVRFDLSGATSSSYKTFIKN) is disordered. Residues 8 to 20 (GATSSSYKTFIKN) show a composition bias toward polar residues.

The protein belongs to the ribosome-inactivating protein family. Type 1 RIP subfamily.

The enzyme catalyses Endohydrolysis of the N-glycosidic bond at one specific adenosine on the 28S rRNA.. The sequence is that of Ribosome-inactivating protein from Cucurbita pepo (Vegetable marrow).